Reading from the N-terminus, the 535-residue chain is Dual specificity calcium/calmodulin-dependent 3',5'-cyclic nucleotide phosphodiesterase 1B (535 aa).

Positions 1-21 (MELSPRSPPEMLESDCPSPLE) are disordered. Residues serine 7 and serine 14 each carry the phosphoserine modification. Calmodulin-binding stretches follow at residues 27-47 (SKKM…QLEN) and 117-140 (EKPK…MFRR). The PDEase domain occupies 145 to 502 (VGPTYSTAVH…QKWKERAASG (358 aa)). Histidine 222 acts as the Proton donor in catalysis. Histidine 226, histidine 262, aspartate 263, and aspartate 369 together coordinate Zn(2+). Aspartate 263 lines the Mg(2+) pocket. Disordered regions lie at residues 445 to 474 (PLTD…GDPN) and 495 to 535 (WKER…GNLD). Polar residues predominate over residues 454–463 (KSQPSFQWRQ). A phosphoserine mark is found at serine 465 and serine 513.

Belongs to the cyclic nucleotide phosphodiesterase family. PDE1 subfamily. In terms of assembly, homodimer. Zn(2+) is required as a cofactor. Mg(2+) serves as cofactor. Expressed in brain.

It is found in the cytoplasm. It localises to the cytosol. The catalysed reaction is a nucleoside 3',5'-cyclic phosphate + H2O = a nucleoside 5'-phosphate + H(+). It catalyses the reaction 3',5'-cyclic GMP + H2O = GMP + H(+). It carries out the reaction 3',5'-cyclic AMP + H2O = AMP + H(+). Type I PDE are activated by the binding of calmodulin in the presence of Ca(2+). Functionally, cyclic nucleotide phosphodiesterase with a dual specificity for the second messengers cAMP and cGMP, which are key regulators of many important physiological processes. Has a preference for cGMP as a substrate. This Rattus norvegicus (Rat) protein is Dual specificity calcium/calmodulin-dependent 3',5'-cyclic nucleotide phosphodiesterase 1B.